Here is a 177-residue protein sequence, read N- to C-terminus: Actinorhodin polyketide dimerase (177 aa).

It to S.pristinaespiralis SnaC.

It functions in the pathway antibiotic biosynthesis; actinorhodin biosynthesis. The protein is Actinorhodin polyketide dimerase (actVB) of Streptomyces coelicolor (strain ATCC BAA-471 / A3(2) / M145).